A 188-amino-acid chain; its full sequence is MYNILKKSFYKQKSLDVASSLLGKMLLFNQHKGIITETEAYIGQDDQAAHSFHGYTKRTAVMFGNPGFSYVYLIYGMYHCLNVVTEPEGFPAAILIRSIILLSKNTPHTKVNGPGKICKILDITKEHNNIDMTANHSFCICDTNLNIDDYICTPRIGISKATDKFWRFVIPDVTSLQYIDTKLVPTLT.

The protein belongs to the DNA glycosylase MPG family.

The sequence is that of Putative 3-methyladenine DNA glycosylase from Ehrlichia ruminantium (strain Welgevonden).